We begin with the raw amino-acid sequence, 180 residues long: UDP-4-amino-4,6-dideoxy-N-acetyl-beta-L-altrosamine N-acetyltransferase (180 aa).

Residues 13–169 enclose the N-acetyltransferase domain; it reads IDFTNLNDGE…IDVLLYYKDK (157 aa).

It carries out the reaction UDP-4-amino-4,6-dideoxy-N-acetyl-beta-L-altrosamine + acetyl-CoA = UDP-2,4-diacetamido-2,4,6-trideoxy-beta-L-altrose + CoA + H(+). In terms of biological role, catalyzes the third step in the biosynthesis of pseudaminic acid, a sialic-acid-like sugar that is used to modify flagellin. Mediates N-4 acetylation of UDP-4-amino-4,6-dideoxy-beta-L-AltNAc to form UDP-2,4-diacetamido-2,4,6-trideoxy-beta-L-altropyranose. The chain is UDP-4-amino-4,6-dideoxy-N-acetyl-beta-L-altrosamine N-acetyltransferase (pseH) from Helicobacter pylori (strain ATCC 700392 / 26695) (Campylobacter pylori).